Reading from the N-terminus, the 348-residue chain is GTPase Obg (348 aa).

One can recognise an Obg domain in the interval 1–159; that stretch reads MKFLDQARIY…MTLWLRLKLI (159 aa). The 168-residue stretch at 160–327 folds into the OBG-type G domain; the sequence is ADAGLVGLPN…TLQSLLAAID (168 aa). GTP contacts are provided by residues 166–173, 191–195, 212–215, 279–282, and 308–310; these read GLPNAGKS, FTTLH, DIPG, SKID, and SAA. The Mg(2+) site is built by S173 and T193.

This sequence belongs to the TRAFAC class OBG-HflX-like GTPase superfamily. OBG GTPase family. In terms of assembly, monomer. The cofactor is Mg(2+).

Its subcellular location is the cytoplasm. Its function is as follows. An essential GTPase which binds GTP, GDP and possibly (p)ppGpp with moderate affinity, with high nucleotide exchange rates and a fairly low GTP hydrolysis rate. Plays a role in control of the cell cycle, stress response, ribosome biogenesis and in those bacteria that undergo differentiation, in morphogenesis control. This chain is GTPase Obg, found in Beijerinckia indica subsp. indica (strain ATCC 9039 / DSM 1715 / NCIMB 8712).